Consider the following 254-residue polypeptide: MSHNFKKSLGQNFLQDKNIIEKIVNFIPLENEDVLEIGPGQGALTNLLVKKSKNVLAYEIDKELIPFLKEKIKAKNFTLKHEDFLKSEIDFQDKKIIIANIPYFITSDILFKIFENHKFFTKALIMVQKEIADKLIAKANDSNYGKLSVSSQFFANIKKVINVPRTCFYPQPNVDSAVVYFEFKNDIENIDIEKFLVFIKTCFSQQRKKLSNNLKNVYDLEKIKSVLKKLNLSFEVRPQQIDLNVYKILFYELN.

S-adenosyl-L-methionine is bound by residues Asn12, Leu14, Gly38, Glu59, Asp83, and Asn100.

Belongs to the class I-like SAM-binding methyltransferase superfamily. rRNA adenine N(6)-methyltransferase family. RsmA subfamily.

It localises to the cytoplasm. It carries out the reaction adenosine(1518)/adenosine(1519) in 16S rRNA + 4 S-adenosyl-L-methionine = N(6)-dimethyladenosine(1518)/N(6)-dimethyladenosine(1519) in 16S rRNA + 4 S-adenosyl-L-homocysteine + 4 H(+). Functionally, specifically dimethylates two adjacent adenosines (A1518 and A1519) in the loop of a conserved hairpin near the 3'-end of 16S rRNA in the 30S particle. May play a critical role in biogenesis of 30S subunits. This Mycoplasma mobile (strain ATCC 43663 / 163K / NCTC 11711) (Mesomycoplasma mobile) protein is Ribosomal RNA small subunit methyltransferase A.